The sequence spans 90 residues: Small ribosomal subunit protein uS15c (90 aa).

This sequence belongs to the universal ribosomal protein uS15 family. Part of the 30S ribosomal subunit.

The protein localises to the plastid. The protein resides in the chloroplast. This is Small ribosomal subunit protein uS15c (rps15) from Panax ginseng (Korean ginseng).